The sequence spans 47 residues: Heat shock protein HSP 90 (47 aa).

This sequence belongs to the heat shock protein 90 family. In terms of assembly, homodimer.

It localises to the cytoplasm. Its function is as follows. Putative molecular chaperone that may promote the maturation, structural maintenance and proper regulation of specific target proteins. The chain is Heat shock protein HSP 90 from Oryctolagus cuniculus (Rabbit).